Consider the following 143-residue polypeptide: Nucleoside diphosphate kinase (143 aa).

ATP is bound by residues Lys11, Phe59, Arg87, Thr93, Arg104, and Asn114. Residue His117 is the Pros-phosphohistidine intermediate of the active site.

The protein belongs to the NDK family. In terms of assembly, homotetramer. It depends on Mg(2+) as a cofactor.

The protein resides in the cytoplasm. The enzyme catalyses a 2'-deoxyribonucleoside 5'-diphosphate + ATP = a 2'-deoxyribonucleoside 5'-triphosphate + ADP. It carries out the reaction a ribonucleoside 5'-diphosphate + ATP = a ribonucleoside 5'-triphosphate + ADP. Its function is as follows. Major role in the synthesis of nucleoside triphosphates other than ATP. The ATP gamma phosphate is transferred to the NDP beta phosphate via a ping-pong mechanism, using a phosphorylated active-site intermediate. This chain is Nucleoside diphosphate kinase, found in Clostridium perfringens (strain ATCC 13124 / DSM 756 / JCM 1290 / NCIMB 6125 / NCTC 8237 / Type A).